The sequence spans 59 residues: Large ribosomal subunit protein bL32c (59 aa).

The tract at residues 36–59 (KSRSFSGVSEHPKPKGFSRQQTNK) is disordered.

This sequence belongs to the bacterial ribosomal protein bL32 family.

It is found in the plastid. The protein localises to the chloroplast. The polypeptide is Large ribosomal subunit protein bL32c (Oryza nivara (Indian wild rice)).